We begin with the raw amino-acid sequence, 686 residues long: Elongation factor G 2 (686 aa).

The 274-residue stretch at Thr-7–Leu-280 folds into the tr-type G domain. GTP-binding positions include Ala-16–Thr-23, Asp-80–His-84, and Asn-134–Asp-137.

This sequence belongs to the TRAFAC class translation factor GTPase superfamily. Classic translation factor GTPase family. EF-G/EF-2 subfamily.

The protein localises to the cytoplasm. Functionally, catalyzes the GTP-dependent ribosomal translocation step during translation elongation. During this step, the ribosome changes from the pre-translocational (PRE) to the post-translocational (POST) state as the newly formed A-site-bound peptidyl-tRNA and P-site-bound deacylated tRNA move to the P and E sites, respectively. Catalyzes the coordinated movement of the two tRNA molecules, the mRNA and conformational changes in the ribosome. This is Elongation factor G 2 (fusB) from Streptomyces coelicolor (strain ATCC BAA-471 / A3(2) / M145).